A 306-amino-acid polypeptide reads, in one-letter code: Pyridoxal 5'-phosphate synthase subunit PdxS (306 aa).

Asp-36 is a binding site for D-ribose 5-phosphate. Lys-93 serves as the catalytic Schiff-base intermediate with D-ribose 5-phosphate. D-ribose 5-phosphate is bound at residue Gly-165. Residue Arg-177 coordinates D-glyceraldehyde 3-phosphate. D-ribose 5-phosphate is bound by residues Gly-226 and 247–248 (GS).

It belongs to the PdxS/SNZ family. As to quaternary structure, in the presence of PdxT, forms a dodecamer of heterodimers.

The enzyme catalyses aldehydo-D-ribose 5-phosphate + D-glyceraldehyde 3-phosphate + L-glutamine = pyridoxal 5'-phosphate + L-glutamate + phosphate + 3 H2O + H(+). It participates in cofactor biosynthesis; pyridoxal 5'-phosphate biosynthesis. Functionally, catalyzes the formation of pyridoxal 5'-phosphate from ribose 5-phosphate (RBP), glyceraldehyde 3-phosphate (G3P) and ammonia. The ammonia is provided by the PdxT subunit. Can also use ribulose 5-phosphate and dihydroxyacetone phosphate as substrates, resulting from enzyme-catalyzed isomerization of RBP and G3P, respectively. This is Pyridoxal 5'-phosphate synthase subunit PdxS from Corynebacterium urealyticum (strain ATCC 43042 / DSM 7109).